We begin with the raw amino-acid sequence, 393 residues long: Protein TsgA homolog (393 aa).

The next 12 membrane-spanning stretches (helical) occupy residues 11-31 (WISFLSYALTGALVIVTGMVM), 51-71 (FLNAGILISIFLNAWLMEIIP), 78-98 (FGFVLMVLAVAGLMLSHSLAL), 101-121 (AAMFVLGLVSGITMSIGTFLI), 134-154 (LLFTDSFFSMAGMIFPMVAAY), 162-182 (WYWVYACIGLVYVAIFILTFG), 206-226 (IGVLFLSIAALCYILGQLGFI), 245-265 (TLVSDFWMSYMFGMWAFSFIL), 273-293 (ILTVLAGLAAVLMYLFIKAQP), 297-317 (AWFILTLGFFSSAIYTSIITL), 332-352 (FVLTCGTIGTMLTFVVTGPIV), and 361-381 (LLTANGLYAVVFVMCFILGFV).

It belongs to the major facilitator superfamily. TsgA family.

It is found in the cell inner membrane. The protein is Protein TsgA homolog of Citrobacter koseri (strain ATCC BAA-895 / CDC 4225-83 / SGSC4696).